We begin with the raw amino-acid sequence, 128 residues long: Ribosome-binding factor A (128 aa).

Belongs to the RbfA family. As to quaternary structure, monomer. Binds 30S ribosomal subunits, but not 50S ribosomal subunits or 70S ribosomes.

The protein localises to the cytoplasm. One of several proteins that assist in the late maturation steps of the functional core of the 30S ribosomal subunit. Associates with free 30S ribosomal subunits (but not with 30S subunits that are part of 70S ribosomes or polysomes). Required for efficient processing of 16S rRNA. May interact with the 5'-terminal helix region of 16S rRNA. This Rickettsia prowazekii (strain Madrid E) protein is Ribosome-binding factor A.